Here is a 278-residue protein sequence, read N- to C-terminus: HTH-type transcriptional regulator HdfR (278 aa).

The 58-residue stretch at 1–58 (MDTELLKTFLEVSRTRHFGRAAEALYLTQSAVSFRIRQLENQLGVNLFTRHRNNIRLT) folds into the HTH lysR-type domain. Residues 18–37 (FGRAAEALYLTQSAVSFRIR) constitute a DNA-binding region (H-T-H motif).

It belongs to the LysR transcriptional regulatory family.

Its function is as follows. Negatively regulates the transcription of the flagellar master operon flhDC by binding to the upstream region of the operon. The chain is HTH-type transcriptional regulator HdfR from Salmonella dublin (strain CT_02021853).